Reading from the N-terminus, the 119-residue chain is uncharacterized protein (119 aa).

Transmembrane regions (helical) follow at residues 61–80 (LISASSCSSLVSSPFFLLSV) and 87–103 (VVGVVVIDGFVVSVDII).

Its subcellular location is the membrane. This is an uncharacterized protein from Saccharomyces cerevisiae (strain ATCC 204508 / S288c) (Baker's yeast).